We begin with the raw amino-acid sequence, 122 residues long: Large ribosomal subunit protein uL14c (122 aa).

It belongs to the universal ribosomal protein uL14 family. Part of the 50S ribosomal subunit.

Its subcellular location is the plastid. It localises to the chloroplast. In terms of biological role, binds to 23S rRNA. This chain is Large ribosomal subunit protein uL14c, found in Illicium oligandrum (Star anise).